A 118-amino-acid polypeptide reads, in one-letter code: V-type proton ATPase subunit F (118 aa).

It belongs to the V-ATPase F subunit family. As to quaternary structure, V-ATPase is a heteromultimeric enzyme composed of a peripheral catalytic V1 complex (components A to H) attached to an integral membrane V0 proton pore complex (components: a, c, c', c'', d, e, f and VOA1).

The protein localises to the vacuole membrane. Its function is as follows. Subunit of the V1 complex of vacuolar(H+)-ATPase (V-ATPase), a multisubunit enzyme composed of a peripheral complex (V1) that hydrolyzes ATP and a membrane integral complex (V0) that translocates protons. V-ATPase is responsible for acidifying and maintaining the pH of intracellular compartments. The polypeptide is V-type proton ATPase subunit F (Saccharomyces cerevisiae (strain ATCC 204508 / S288c) (Baker's yeast)).